A 332-amino-acid chain; its full sequence is Glycerol-3-phosphate dehydrogenase [NAD(P)+] (332 aa).

NADPH is bound by residues Trp11, Arg30, and Lys108. Sn-glycerol 3-phosphate contacts are provided by Lys108, Gly137, and Ser139. Residue Ala141 coordinates NADPH. Positions 192, 245, 255, 256, and 257 each coordinate sn-glycerol 3-phosphate. The active-site Proton acceptor is Lys192. NADPH is bound at residue Arg256. The NADPH site is built by Val280 and Glu282.

The protein belongs to the NAD-dependent glycerol-3-phosphate dehydrogenase family.

The protein resides in the cytoplasm. It carries out the reaction sn-glycerol 3-phosphate + NAD(+) = dihydroxyacetone phosphate + NADH + H(+). It catalyses the reaction sn-glycerol 3-phosphate + NADP(+) = dihydroxyacetone phosphate + NADPH + H(+). It functions in the pathway membrane lipid metabolism; glycerophospholipid metabolism. Catalyzes the reduction of the glycolytic intermediate dihydroxyacetone phosphate (DHAP) to sn-glycerol 3-phosphate (G3P), the key precursor for phospholipid synthesis. The protein is Glycerol-3-phosphate dehydrogenase [NAD(P)+] of Burkholderia orbicola (strain AU 1054).